We begin with the raw amino-acid sequence, 147 residues long: MVHMSAEEKGIVTSMWGKVNVDDIGAEALGRLLVVYPWTQRFFDSFGDLSSPAAIMGNPKVKAHGKKVAHSISDGIKNLDNLKGTYAKLSELHCDKLHVDPENFRLLGNVLVCVLARNLGKEFTPHARTAFQKMVLEVAAALAHKYH.

Position 2 is an N-acetylvaline (V2). The Globin domain occupies 3-147 (HMSAEEKGIV…VAAALAHKYH (145 aa)). A Phosphothreonine modification is found at T13. S45 is modified (phosphoserine). K60 carries the N6-acetyllysine modification. H64 contacts heme b. K83 bears the N6-acetyllysine mark. H93 is a heme b binding site. Residue C94 is modified to S-nitrosocysteine. K145 is modified (N6-acetyllysine).

Belongs to the globin family. Heterotetramer of two alpha chains and two beta chains. Red blood cells.

Its function is as follows. Involved in oxygen transport from the lung to the various peripheral tissues. In Scalopus aquaticus (Eastern mole), this protein is Hemoglobin subunit beta (HBB).